The sequence spans 302 residues: Recombination-associated protein RdgC (302 aa).

It belongs to the RdgC family.

It is found in the cytoplasm. The protein resides in the nucleoid. Functionally, may be involved in recombination. This chain is Recombination-associated protein RdgC, found in Psychromonas ingrahamii (strain DSM 17664 / CCUG 51855 / 37).